The primary structure comprises 389 residues: Fructose-1,6-bisphosphate aldolase/phosphatase (389 aa).

The active-site Proton acceptor; for FBP phosphatase activity is the aspartate 17. Aspartate 17, histidine 24, aspartate 57, and aspartate 58 together coordinate Mg(2+). Beta-D-fructose 1,6-bisphosphate is bound at residue histidine 24. Histidine 24 provides a ligand contact to dihydroxyacetone phosphate. Tyrosine 95 contributes to the beta-D-fructose 1,6-bisphosphate binding site. Mg(2+) is bound at residue glutamine 99. 108 to 109 (GN) contacts beta-D-fructose 1,6-bisphosphate. Aspartate 136 lines the Mg(2+) pocket. Residue lysine 137 participates in beta-D-fructose 1,6-bisphosphate binding. Lysine 137 contacts dihydroxyacetone phosphate. Tyrosine 233 functions as the Proton donor/acceptor; for FBP aldolase activity in the catalytic mechanism. Residues lysine 236, aspartate 237, and aspartate 238 each coordinate Mg(2+). Lysine 236 (schiff-base intermediate with DHAP; for FBP aldolase activity) is an active-site residue. Residues 246-247 (QS), arginine 270, aspartate 291, and tyrosine 352 contribute to the beta-D-fructose 1,6-bisphosphate site. Residues arginine 270 and aspartate 291 each contribute to the dihydroxyacetone phosphate site.

This sequence belongs to the FBP aldolase/phosphatase family. Homooctamer; dimer of tetramers. Requires Mg(2+) as cofactor.

It carries out the reaction beta-D-fructose 1,6-bisphosphate + H2O = beta-D-fructose 6-phosphate + phosphate. The catalysed reaction is beta-D-fructose 1,6-bisphosphate = D-glyceraldehyde 3-phosphate + dihydroxyacetone phosphate. The protein operates within carbohydrate biosynthesis; gluconeogenesis. In terms of biological role, catalyzes two subsequent steps in gluconeogenesis: the aldol condensation of dihydroxyacetone phosphate (DHAP) and glyceraldehyde-3-phosphate (GA3P) to fructose-1,6-bisphosphate (FBP), and the dephosphorylation of FBP to fructose-6-phosphate (F6P). The sequence is that of Fructose-1,6-bisphosphate aldolase/phosphatase from Methanocaldococcus jannaschii (strain ATCC 43067 / DSM 2661 / JAL-1 / JCM 10045 / NBRC 100440) (Methanococcus jannaschii).